We begin with the raw amino-acid sequence, 355 residues long: Protein RecA (355 aa).

Position 67–74 (67–74) interacts with ATP; sequence GPESSGKT.

Belongs to the RecA family.

It is found in the cytoplasm. Its function is as follows. Can catalyze the hydrolysis of ATP in the presence of single-stranded DNA, the ATP-dependent uptake of single-stranded DNA by duplex DNA, and the ATP-dependent hybridization of homologous single-stranded DNAs. It interacts with LexA causing its activation and leading to its autocatalytic cleavage. The sequence is that of Protein RecA from Histophilus somni (strain 129Pt) (Haemophilus somnus).